The chain runs to 91 residues: Small ribosomal subunit protein uS19 (91 aa).

Belongs to the universal ribosomal protein uS19 family.

Protein S19 forms a complex with S13 that binds strongly to the 16S ribosomal RNA. The sequence is that of Small ribosomal subunit protein uS19 from Bordetella bronchiseptica (strain ATCC BAA-588 / NCTC 13252 / RB50) (Alcaligenes bronchisepticus).